A 319-amino-acid polypeptide reads, in one-letter code: uncharacterized protein (319 aa).

Residues S268–P312 are compositionally biased toward low complexity. The segment at S268–F319 is disordered.

This is an uncharacterized protein from Lepidoptera (butterflies and moths).